Reading from the N-terminus, the 389-residue chain is MQTFAEELEALRAEGLYRSMRVIKGAQGSRVELDGKQVLMLCSNNYLGLADHPELRSAAVFGVAFGVGSGASRLVSGTMELHEKLEERIAAFKGTEKALVFNSGYAANTGIVSALVGRGDAIFSDRLNHASIIDGALLSRADLHRYPHRDMAALERLLQDKGGNGRRLIVTDGVFSMDGDIAPLQDLVRLAKKYGALLMVDDAHGTGVLGPTGRGSGELLGVMDGIDIHMGTLGKGLGSFGAYAAASATICDYLVNKARSFIFSTSLPPAVLAASIAAIELVDSPEGKELREKLAANVALFKEKLAQAGFDTMGSETQIVPIFVGPADATMEFSKVLLEQGIFVQGIRPPTVPSGSCRLRCTIMATHEPAELEEAAGIIEQVGKKLGVV.

R18 is a binding site for substrate. 104–105 (GY) lines the pyridoxal 5'-phosphate pocket. H129 contacts substrate. 3 residues coordinate pyridoxal 5'-phosphate: S176, H204, and T232. The residue at position 235 (K235) is an N6-(pyridoxal phosphate)lysine. T351 is a binding site for substrate.

Belongs to the class-II pyridoxal-phosphate-dependent aminotransferase family. BioF subfamily. As to quaternary structure, homodimer. Pyridoxal 5'-phosphate serves as cofactor.

The catalysed reaction is 6-carboxyhexanoyl-[ACP] + L-alanine + H(+) = (8S)-8-amino-7-oxononanoate + holo-[ACP] + CO2. It functions in the pathway cofactor biosynthesis; biotin biosynthesis. Functionally, catalyzes the decarboxylative condensation of pimeloyl-[acyl-carrier protein] and L-alanine to produce 8-amino-7-oxononanoate (AON), [acyl-carrier protein], and carbon dioxide. This chain is 8-amino-7-oxononanoate synthase, found in Citrifermentans bemidjiense (strain ATCC BAA-1014 / DSM 16622 / JCM 12645 / Bem) (Geobacter bemidjiensis).